A 250-amino-acid chain; its full sequence is 5'-nucleotidase SurE (250 aa).

Residues Asp-8, Asp-9, Ser-40, and Asn-95 each contribute to the a divalent metal cation site.

The protein belongs to the SurE nucleotidase family. It depends on a divalent metal cation as a cofactor.

Its subcellular location is the cytoplasm. The enzyme catalyses a ribonucleoside 5'-phosphate + H2O = a ribonucleoside + phosphate. Functionally, nucleotidase that shows phosphatase activity on nucleoside 5'-monophosphates. In Nitratidesulfovibrio vulgaris (strain DP4) (Desulfovibrio vulgaris), this protein is 5'-nucleotidase SurE.